The following is a 391-amino-acid chain: MFPNGTASSPSSSPSPSPGSCGEGACSRGPGSGAADGMEEPGRNASQNGTLSEGQGSAILISFIYSVVCLVGLCGNSMVIYVILRYAKMKTATNIYILNLAIADELLMLSVPFLVTSTLLRHWPFGALLCRLVLSVDAVNMFTSIYCLTVLSVDRYVAVVHPIKAARYRRPTVAKVVNLGVWVLSLLVILPIVVFSRTAANSDGTVACNMLMPEPAQRWLVGFVLYTFLMGFLLPVGAICLCYVLIIAKMRMVALKAGWQQRKRSERKITLMVMMVVMVFVICWMPFYVVQLVNVFAEQDDATVSQLSVILGYANSCANPILYGFLSDNFKRSFQRILCLSWMDNAAEEPVDYYATALKSRAYSVEDFQPENLESGGVFRNGTCASRISTL.

The tract at residues 1–50 is disordered; it reads MFPNGTASSPSSSPSPSPGSCGEGACSRGPGSGAADGMEEPGRNASQNGT. The Extracellular portion of the chain corresponds to 1–56; it reads MFPNGTASSPSSSPSPSPGSCGEGACSRGPGSGAADGMEEPGRNASQNGTLSEGQG. An N-linked (GlcNAc...) asparagine glycan is attached at Asn4. Over residues 8–20 the composition is skewed to low complexity; the sequence is SSPSSSPSPSPGS. 2 N-linked (GlcNAc...) asparagine glycosylation sites follow: Asn44 and Asn48. Residues 57-84 traverse the membrane as a helical segment; it reads SAILISFIYSVVCLVGLCGNSMVIYVIL. The Cytoplasmic portion of the chain corresponds to 85–94; that stretch reads RYAKMKTATN. A helical transmembrane segment spans residues 95-120; the sequence is IYILNLAIADELLMLSVPFLVTSTLL. Topologically, residues 121 to 131 are extracellular; sequence RHWPFGALLCR. Residues Cys130 and Cys208 are joined by a disulfide bond. Residues 132–153 form a helical membrane-spanning segment; sequence LVLSVDAVNMFTSIYCLTVLSV. At 154–175 the chain is on the cytoplasmic side; it reads DRYVAVVHPIKAARYRRPTVAK. The helical transmembrane segment at 176-196 threads the bilayer; it reads VVNLGVWVLSLLVILPIVVFS. Residues 197 to 219 lie on the Extracellular side of the membrane; that stretch reads RTAANSDGTVACNMLMPEPAQRW. Residues 220 to 244 traverse the membrane as a helical segment; the sequence is LVGFVLYTFLMGFLLPVGAICLCYV. At 245-270 the chain is on the cytoplasmic side; it reads LIIAKMRMVALKAGWQQRKRSERKIT. The chain crosses the membrane as a helical span at residues 271–296; the sequence is LMVMMVVMVFVICWMPFYVVQLVNVF. Residues 297 to 303 are Extracellular-facing; that stretch reads AEQDDAT. Residues 304 to 327 form a helical membrane-spanning segment; the sequence is VSQLSVILGYANSCANPILYGFLS. Over 328–391 the chain is Cytoplasmic; it reads DNFKRSFQRI…GTCASRISTL (64 aa). Cys339 carries S-palmitoyl cysteine lipidation.

Belongs to the G-protein coupled receptor 1 family. In terms of tissue distribution, jejunum and stomach.

It is found in the cell membrane. Its function is as follows. Receptor for somatostatin with higher affinity for somatostatin-14 than -28. This receptor is coupled via pertussis toxin sensitive G proteins to inhibition of adenylyl cyclase. In addition it stimulates phosphotyrosine phosphatase and Na(+)/H(+) exchanger via pertussis toxin insensitive G proteins. In Mus musculus (Mouse), this protein is Somatostatin receptor type 1 (Sstr1).